The primary structure comprises 307 residues: Cytochrome c1, heme protein, mitochondrial (307 aa).

Residues 1–56 (MFQFVKKKNEFLKFARLGSRAFTQNAQKTHSKGSNIALVSSSLLSVGMIALYYNVY) constitute a mitochondrion transit peptide. Topologically, residues 57-269 (GPSLSAGTPK…EPELDIRKKM (213 aa)) are mitochondrial intermembrane. In terms of domain architecture, Cytochrome c spans 89–259 (ASLRRGFQVY…DVVNFLHWAS (171 aa)). 4 residues coordinate heme c: C102, C105, H106, and M225. The chain crosses the membrane as a helical span at residues 270 to 287 (GFQVITVLTILTALSMWY). At 288 to 307 (KRFKWTPIKNRKIFYQRPIK) the chain is on the mitochondrial matrix side.

It belongs to the cytochrome c family. As to quaternary structure, component of the ubiquinol-cytochrome c oxidoreductase (cytochrome b-c1 complex, complex III, CIII), a multisubunit enzyme composed of 3 respiratory subunits cytochrome b, cytochrome c1 and Rieske protein, 2 core protein subunits, and additional low-molecular weight protein subunits. The complex exists as an obligatory dimer and forms supercomplexes (SCs) in the inner mitochondrial membrane with cytochrome c oxidase (complex IV, CIV). Requires heme c as cofactor.

It is found in the mitochondrion inner membrane. The enzyme catalyses a quinol + 2 Fe(III)-[cytochrome c](out) = a quinone + 2 Fe(II)-[cytochrome c](out) + 2 H(+)(out). Component of the ubiquinol-cytochrome c oxidoreductase, a multisubunit transmembrane complex that is part of the mitochondrial electron transport chain which drives oxidative phosphorylation. The respiratory chain contains 3 multisubunit complexes succinate dehydrogenase (complex II, CII), ubiquinol-cytochrome c oxidoreductase (cytochrome b-c1 complex, complex III, CIII) and cytochrome c oxidase (complex IV, CIV), that cooperate to transfer electrons derived from NADH and succinate to molecular oxygen, creating an electrochemical gradient over the inner membrane that drives transmembrane transport and the ATP synthase. The cytochrome b-c1 complex catalyzes electron transfer from ubiquinol to cytochrome c, linking this redox reaction to translocation of protons across the mitochondrial inner membrane, with protons being carried across the membrane as hydrogens on the quinol. In the process called Q cycle, 2 protons are consumed from the matrix, 4 protons are released into the intermembrane space and 2 electrons are passed to cytochrome c. Cytochrome c1 is a catalytic core subunit containing a c-type heme. It transfers electrons from the [2Fe-2S] iron-sulfur cluster of the Rieske protein to cytochrome c. This is Cytochrome c1, heme protein, mitochondrial (cyt1) from Schizosaccharomyces pombe (strain 972 / ATCC 24843) (Fission yeast).